The primary structure comprises 687 residues: TWiK family of potassium channels protein 12 (687 aa).

Topologically, residues 1–21 (MTLFQKLQWFCQLIRLRAYYK) are cytoplasmic. Residues 22–42 (FLLLIAYTLFGAWLFRFYELQ) traverse the membrane as a helical segment. N-linked (GlcNAc...) asparagine glycans are attached at residues N53, N77, and N98. The pore-forming intramembrane region spans 112–132 (WTWTGAMFYAGQLYTTIGYGY). A helical membrane pass occupies residues 142-162 (ICTVLYALFGIPCFLMYLKAI). At 163–212 (GKTLSKRLKKIYKRVRRSAFGKFLLPTRVTATKDGFEDPDASAEERKRKP) the chain is on the cytoplasmic side. The helical transmembrane segment at 213–233 (FPIPIAIILLIIWICFSASMF) threads the bilayer. The segment at residues 242–262 (FPSAVYFFIVSISTVGLGDML) is an intramembrane region (pore-forming). A helical membrane pass occupies residues 270–290 (VFNFLLILFGLALLSMCFELI). Over 291-687 (TDRIAKWKQK…SKRDAPVNIV (397 aa)) the chain is Cytoplasmic. Positions 661 to 687 (SPSTSTSTSMIDSGYDLSKRDAPVNIV) are disordered. Basic and acidic residues predominate over residues 677 to 687 (LSKRDAPVNIV).

Belongs to the two pore domain potassium channel (TC 1.A.1.8) family.

The protein resides in the membrane. The sequence is that of TWiK family of potassium channels protein 12 from Caenorhabditis briggsae.